The following is a 642-amino-acid chain: Cylicin-1 (642 aa).

Disordered stretches follow at residues 167–203 (NGEP…NLEY) and 284–607 (NCSQ…CEPF). The span at 191–203 (KTSNSTSETNLEY) shows a compositional bias: polar residues. Tandem repeats lie at residues 294 to 313 (LKTG…GSKD), 314 to 344 (AKKE…DSKD), 345 to 391 (GKKK…KKST), 392 to 432 (GSTG…SSKK), 433 to 464 (SKKD…SEGD), 465 to 500 (STGK…SDLG), 501 to 526 (VNKK…SKAG), and 527 to 543 (RRKN…DSSG). Residues 298–316 (GKKERDSDIDSGGSKDAKK) are compositionally biased toward basic and acidic residues. Residues 317-330 (EGKKKGKRESRKKR) show a composition bias toward basic residues. Basic and acidic residues predominate over residues 353 to 364 (KKNEIKKKKDTD). The span at 388-404 (KKSTGSTGSESVDSKST) shows a compositional bias: low complexity. Over residues 405–416 (NKVKKQVKKGVM) the composition is skewed to basic residues. Positions 428 to 440 (ASSKKSKKDEKKE) are enriched in basic and acidic residues. Residues 454–463 (STDADSESEG) are compositionally biased toward acidic residues. Positions 465–488 (STGKKNEKKDKKITKKGEKKDAKK) are enriched in basic and acidic residues. Low complexity predominate over residues 513 to 523 (SFSDSTSDSYS). Residues 527–543 (RRKNVRRSDSESEDSSG) are 8 X approximate tandem repeats.

In terms of assembly, interacts with proteins of spermatozoa head including ACTL7A, CCIN, FAM209 and SPACA1; the interactions may be necessary for proper acrosome attachment to the nuclear envelope. As to expression, testis.

It is found in the cytoplasm. The protein localises to the cytoskeleton. It localises to the perinuclear theca. The protein resides in the calyx. Its function is as follows. Plays a role in the establishment of normal sperm morphology during spermatogenesis and is required for acrosome attachment to the nuclear envelope. The polypeptide is Cylicin-1 (Mus musculus (Mouse)).